Consider the following 342-residue polypeptide: Glucokinase (342 aa).

G18 to T23 lines the ATP pocket.

Belongs to the bacterial glucokinase family.

It localises to the cytoplasm. The enzyme catalyses D-glucose + ATP = D-glucose 6-phosphate + ADP + H(+). This chain is Glucokinase, found in Chelativorans sp. (strain BNC1).